Consider the following 197-residue polypeptide: MEKFTTYTGVGVPLQRSNVDTDQIIPAVYLKRVTRTGFEDGLFSNWRQNDPNFVLNTDTYKNGSVLVAGPDFGTGSSREHAVWALMDYGFRAVFSSRFADIFRGNSGKAGMLTGIMEQSDIELLWKLMEQTPGLELTVNLEKQIVTAGDVVISFEVDPYIRWRLMEGLDDAGLTLRKLDEIEDYEAKRPAFKPRTNA.

This sequence belongs to the LeuD family. LeuD type 1 subfamily. In terms of assembly, heterodimer of LeuC and LeuD.

The catalysed reaction is (2R,3S)-3-isopropylmalate = (2S)-2-isopropylmalate. It functions in the pathway amino-acid biosynthesis; L-leucine biosynthesis; L-leucine from 3-methyl-2-oxobutanoate: step 2/4. Its function is as follows. Catalyzes the isomerization between 2-isopropylmalate and 3-isopropylmalate, via the formation of 2-isopropylmaleate. This is 3-isopropylmalate dehydratase small subunit from Corynebacterium glutamicum (strain ATCC 13032 / DSM 20300 / JCM 1318 / BCRC 11384 / CCUG 27702 / LMG 3730 / NBRC 12168 / NCIMB 10025 / NRRL B-2784 / 534).